A 206-amino-acid chain; its full sequence is Ras-related protein ralB-B (206 aa).

Residue 21–28 coordinates GTP; it reads GSGGVGKS. Positions 43-51 match the Effector region motif; the sequence is YEPTKADSY. Residues 68 to 72 and 128 to 131 each bind GTP; these read DTAGQ and NKSD. Positions 180-189 are enriched in basic and acidic residues; that stretch reads KMSENKDKNG. A disordered region spans residues 180–206; sequence KMSENKDKNGKKSGKSKKGFKQRCCLL. A compositionally biased stretch (basic residues) spans 190 to 200; sequence KKSGKSKKGFK. Cysteine 203 bears the Cysteine methyl ester mark. Cysteine 203 carries S-geranylgeranyl cysteine lipidation. The propeptide at 204–206 is removed in mature form; sequence CLL.

The protein belongs to the small GTPase superfamily. Ras family. In terms of assembly, interacts with ralbp1 and rap1gds1.

The protein localises to the cell membrane. It is found in the midbody. The catalysed reaction is GTP + H2O = GDP + phosphate + H(+). In terms of biological role, multifunctional GTPase involved in a variety of cellular processes including gene expression, cell migration, cell proliferation, oncogenic transformation and membrane trafficking. Accomplishes its multiple functions by interacting with distinct downstream effectors. Acts as a GTP sensor for GTP-dependent exocytosis of dense core vesicles. Required both to stabilize the assembly of the exocyst complex and to localize functional exocyst complexes to the leading edge of migrating cells. Required for suppression of apoptosis. In late stages of cytokinesis, upon completion of the bridge formation between dividing cells, mediates exocyst recruitment to the midbody to drive abscission. Regulates the actin cytoskeleton to play a role in gastrulation or neurulation. During the cleavage stages, the GTP-bound form induces a cortical reaction that affects the localization of pigment granules. Activated by the FGF pathway via ras and ral-GDS, but independently of raf. Directs ralbp1 to the plasma membrane. Involved in ligand-dependent receptor mediated endocytosis of the EGF and insulin receptors. The sequence is that of Ras-related protein ralB-B (ralb-b) from Xenopus laevis (African clawed frog).